We begin with the raw amino-acid sequence, 495 residues long: MGRKKKKQLKPWCWYCNRDFDDEKILIQHQKAKHFKCHICHKKLYTGPGLAIHCMQVHKETIDAVPNAIPGRTDIELEIYGMEGIPEKDMDERRRLLEQKTQESQKKKQQDDSDEYDDDESAASTSFQPQPVQPQQGYIPPMAQPGLPPVPGAPGMPPGIPPLMPGVPPLMPGMPPVMPGMPPGLHHQRKYTQSFCGENIMMPMGGMMPPGPGIPPLMPGMPPGMPPPVPRPGIPPMTQAQAVSAPGILNRPPAPTAAVPAPQPPVTKPLFPSAGQMGTPVTSSSTASSNSESLSASSKALFPSTAQAQAAVQGPVGTDFKPLNSTPAATTTEPPKPTFPAYTQSTASTTSTTNSTAAKPAASITSKPATLTTTSATSKLIHPDEDISLEERRAQLPKYQRNLPRPGQTPIGNPPVGPIGGMMPPQPGLPQQQAMRPPMPPHGQYGGHHQGMPGYLPGAMPPYGQGPPMVPPYQGGPPRPPMGMRPPVMSQGGRY.

Residues 1 to 92 form a microtubule-binding region region; the sequence is MGRKKKKQLK…EGIPEKDMDE (92 aa). 2 C2H2-type zinc fingers span residues 11–34 and 35–58; these read PWCW…KAKH and FKCH…MQVH. Residues 99–111 are compositionally biased toward basic and acidic residues; that stretch reads QKTQESQKKKQQD. 3 disordered regions span residues 99–161, 252–292, and 316–372; these read QKTQ…PGIP, PPAP…SNSE, and VGTD…ATLT. Acidic residues predominate over residues 112–121; that stretch reads DSDEYDDDES. Over residues 127-136 the composition is skewed to polar residues; that stretch reads FQPQPVQPQQ. A compositionally biased stretch (pro residues) spans 142 to 161; sequence MAQPGLPPVPGAPGMPPGIP. Composition is skewed to low complexity over residues 283-292 and 326-372; these read SSSTASSNSE and TPAA…ATLT. The segment at 376-408 is GLEBS; sequence ATSKLIHPDEDISLEERRAQLPKYQRNLPRPGQ. A disordered region spans residues 462-495; sequence PYGQGPPMVPPYQGGPPRPPMGMRPPVMSQGGRY. Pro residues predominate over residues 464-484; it reads GQGPPMVPPYQGGPPRPPMGM.

Interacts (via GLEBS region) with BUB3. In day-13 embryo, strongly expressed in the nervous system (brain, spinal cord and dorsal root ganglia), with strong to weak expression in other regions. Continues to be strongly expressed in the neonatal brain while expression is weak in the brain and spinal cord of adult.

The protein localises to the nucleus. It localises to the chromosome. Its subcellular location is the centromere. The protein resides in the kinetochore. It is found in the cytoplasm. The protein localises to the cytoskeleton. It localises to the spindle. Functionally, kinetochore- and microtubule-binding protein that plays a key role in spindle assembly. ZNF207/BuGZ is mainly composed of disordered low-complexity regions and undergoes phase transition or coacervation to form temperature-dependent liquid droplets. Coacervation promotes microtubule bundling and concentrates tubulin, promoting microtubule polymerization and assembly of spindle and spindle matrix by concentrating its building blocks. Also acts as a regulator of mitotic chromosome alignment by mediating the stability and kinetochore loading of BUB3. Mechanisms by which BUB3 is protected are unclear: according to a first report, ZNF207/BuGZ may act by blocking ubiquitination and proteasomal degradation of BUB3. According to another report, the stabilization is independent of the proteasome. The chain is BUB3-interacting and GLEBS motif-containing protein ZNF207 from Mus musculus (Mouse).